The following is a 208-amino-acid chain: Small ribosomal subunit protein eS1 (208 aa).

This sequence belongs to the eukaryotic ribosomal protein eS1 family.

The sequence is that of Small ribosomal subunit protein eS1 from Saccharolobus solfataricus (strain ATCC 35092 / DSM 1617 / JCM 11322 / P2) (Sulfolobus solfataricus).